A 239-amino-acid chain; its full sequence is Alpha-acetolactate decarboxylase (239 aa).

This sequence belongs to the alpha-acetolactate decarboxylase family.

It carries out the reaction (2S)-2-acetolactate + H(+) = (R)-acetoin + CO2. Its pathway is polyol metabolism; (R,R)-butane-2,3-diol biosynthesis; (R,R)-butane-2,3-diol from pyruvate: step 2/3. Its activity is regulated as follows. The enzyme is active only in the presence of branched-chain amino acids. Valine results in much higher activation than leucine or isoleucine. Functionally, converts acetolactate into acetoin. Regulates leucine and valine biosynthesis by diverting the flux of alpha-acetolactate towards acetoin when the branched-chain amino acids are present in high concentration. The sequence is that of Alpha-acetolactate decarboxylase (aldC) from Streptococcus thermophilus.